The sequence spans 222 residues: N-(5'-phosphoribosyl)anthranilate isomerase (222 aa).

Belongs to the TrpF family.

It carries out the reaction N-(5-phospho-beta-D-ribosyl)anthranilate = 1-(2-carboxyphenylamino)-1-deoxy-D-ribulose 5-phosphate. The protein operates within amino-acid biosynthesis; L-tryptophan biosynthesis; L-tryptophan from chorismate: step 3/5. The protein is N-(5'-phosphoribosyl)anthranilate isomerase of Symbiobacterium thermophilum (strain DSM 24528 / JCM 14929 / IAM 14863 / T).